The primary structure comprises 506 residues: Trans-cinnamate 4-monooxygenase (506 aa).

A helical transmembrane segment spans residues 3-23 (LLLLEKTLLALFIAATIAVTI). Residues 213-218 (RSRLAQ) and A307 each bind (E)-cinnamate. C448 is a binding site for heme.

This sequence belongs to the cytochrome P450 family. It depends on heme as a cofactor.

It is found in the membrane. It catalyses the reaction (E)-cinnamate + reduced [NADPH--hemoprotein reductase] + O2 = (E)-4-coumarate + oxidized [NADPH--hemoprotein reductase] + H2O + H(+). Its pathway is phenylpropanoid metabolism; trans-4-coumarate biosynthesis; trans-4-coumarate from trans-cinnamate: step 1/1. In terms of biological role, catalyzes the first oxidative step of the phenylpropanoid pathway in higher plants by transforming trans-cinnamate into p-coumarate. The compounds formed by this pathway are essential components for lignification, pollination, and defense against ultraviolet light, predators and pathogens. This chain is Trans-cinnamate 4-monooxygenase (CYP73A3), found in Medicago sativa (Alfalfa).